The chain runs to 334 residues: Anthranilate phosphoribosyltransferase (334 aa).

5-phospho-alpha-D-ribose 1-diphosphate contacts are provided by residues Gly79, 82 to 83 (GD), Ser87, 89 to 92 (NIST), 107 to 115 (KHGNRSISS), and Ser119. Gly79 provides a ligand contact to anthranilate. Ser91 is a Mg(2+) binding site. Residue Asn110 coordinates anthranilate. Anthranilate is bound at residue Arg165. The Mg(2+) site is built by Asp224 and Glu225.

It belongs to the anthranilate phosphoribosyltransferase family. As to quaternary structure, homodimer. It depends on Mg(2+) as a cofactor.

It catalyses the reaction N-(5-phospho-beta-D-ribosyl)anthranilate + diphosphate = 5-phospho-alpha-D-ribose 1-diphosphate + anthranilate. It participates in amino-acid biosynthesis; L-tryptophan biosynthesis; L-tryptophan from chorismate: step 2/5. Catalyzes the transfer of the phosphoribosyl group of 5-phosphorylribose-1-pyrophosphate (PRPP) to anthranilate to yield N-(5'-phosphoribosyl)-anthranilate (PRA). The sequence is that of Anthranilate phosphoribosyltransferase from Streptococcus pneumoniae (strain 70585).